The primary structure comprises 169 residues: Superoxide dismutase [Cu-Zn] 1 (169 aa).

An N-terminal signal peptide occupies residues 1–18; the sequence is MFEQWDALCAVLFSFSIA. Residues H65, H67, and H83 each coordinate Cu cation. Cysteines 72 and 165 form a disulfide. Residues H83, H91, H100, and D103 each coordinate Zn(2+). H145 is a binding site for Cu cation.

Belongs to the Cu-Zn superoxide dismutase family. It depends on Cu cation as a cofactor. The cofactor is Zn(2+).

It carries out the reaction 2 superoxide + 2 H(+) = H2O2 + O2. Destroys radicals which are normally produced within the cells and which are toxic to biological systems. This chain is Superoxide dismutase [Cu-Zn] 1 (sodC1), found in Aquifex aeolicus (strain VF5).